The chain runs to 783 residues: Serine/threonine-protein kinase SIK1 (783 aa).

The Protein kinase domain occupies 27 to 278; that stretch reads YDIERTLGKG…IAQIRQHRWM (252 aa). Residues 33–41 and Lys-56 contribute to the ATP site; that span reads LGKGNFAVV. Catalysis depends on Asp-149, which acts as the Proton acceptor. Phosphothreonine; by LKB1 and GSK3-beta is present on Thr-182. Ser-186 bears the Phosphoserine; by autocatalysis mark. The UBA domain maps to 303 to 343; that stretch reads DYDEQALGIMQTLGVDRQRTVESLQNSSYNHFAAIYYLLLE. Thr-322 is modified (phosphothreonine; by CaMK1). Disordered stretches follow at residues 353–377 and 449–477; these read CARPGPARQPRPRSSDLSGLEVPQE and RQGPGLEEEQDTQESLPSSTGRRHTLAEV. Position 473 is a phosphothreonine; by PKA (Thr-473). Ser-575 is modified (phosphoserine; by PKA). An RK-rich region; required for cAMP responsiveness and nuclear localization region spans residues 583–612; that stretch reads LKAFRQQLRKTTRTKGFLGLNKIKGLARQV. The segment at 619–643 is disordered; the sequence is RASRGGLSPFHAPAQSPGLHGGAAG.

This sequence belongs to the protein kinase superfamily. CAMK Ser/Thr protein kinase family. AMPK subfamily. In terms of assembly, interacts with ATP1A1. Interacts (when phosphorylated on Thr-182 and Ser-186) with YWHAZ. Interacts (when phosphorylated at Thr-473 and/or Ser-575) with 14-3-3 proteins; the interaction inhibits kinase activity towards TORCs. There is a cooperative effect of the phosphorylation sites in 14-3-3 binding as the interaction is stronger when both Thr-473 and Ser-575 are modified. Mg(2+) is required as a cofactor. Post-translationally, phosphorylated at Thr-182 by STK11/LKB1 in complex with STE20-related adapter-alpha (STRADA) pseudo kinase and CAB39, leading to its activation. Phosphorylation at Thr-182 promotes autophosphorylation at Ser-186, which is required for sustained activity. Autophosphorylation at Ser-186 is maintained by sequential phosphorylation at Thr-182 by GSK3-beta. GSK3-beta cannot initiate phosphorylation at Thr-182, it can only maintain it. Phosphorylation at Ser-575 in response to cAMP signaling promotes translocation to the cytoplasm. Phosphorylation at Thr-322 by CaMK1 following intracellular sodium concentration leads to activation.

Its subcellular location is the cytoplasm. It is found in the nucleus. It catalyses the reaction L-seryl-[protein] + ATP = O-phospho-L-seryl-[protein] + ADP + H(+). The catalysed reaction is L-threonyl-[protein] + ATP = O-phospho-L-threonyl-[protein] + ADP + H(+). With respect to regulation, activated by phosphorylation on Thr-182. Also activated by phosphorylation on Thr-322 in response to increases in intracellular sodium in parallel with elevations in intracellular calcium through the reversible sodium/calcium exchanger. Inhibited by phosphorylation at Thr-473 and Ser-575, probably by PKA, which triggers interaction with 14-3-3 proteins. Its function is as follows. Serine/threonine-protein kinase involved in various processes such as cell cycle regulation, gluconeogenesis and lipogenesis regulation, muscle growth and differentiation and tumor suppression. Phosphorylates HDAC4, HDAC5, PPME1, SREBF1, CRTC1/TORC1. Inhibits CREB activity by phosphorylating and inhibiting activity of TORCs, the CREB-specific coactivators, like CRTC2/TORC2 and CRTC3/TORC3 in response to cAMP signaling. Acts as a tumor suppressor and plays a key role in p53/TP53-dependent anoikis, a type of apoptosis triggered by cell detachment: required for phosphorylation of p53/TP53 in response to loss of adhesion and is able to suppress metastasis. Part of a sodium-sensing signaling network, probably by mediating phosphorylation of PPME1: following increases in intracellular sodium, SIK1 is activated by CaMK1 and phosphorylates PPME1 subunit of protein phosphatase 2A (PP2A), leading to dephosphorylation of sodium/potassium-transporting ATPase ATP1A1 and subsequent increase activity of ATP1A1. Acts as a regulator of muscle cells by phosphorylating and inhibiting class II histone deacetylases HDAC4 and HDAC5, leading to promote expression of MEF2 target genes in myocytes. Also required during cardiomyogenesis by regulating the exit of cardiomyoblasts from the cell cycle via down-regulation of CDKN1C/p57Kip2. Acts as a regulator of hepatic gluconeogenesis by phosphorylating and repressing the CREB-specific coactivators CRTC1/TORC1 and CRTC2/TORC2, leading to inhibit CREB activity. Also regulates hepatic lipogenesis by phosphorylating and inhibiting SREBF1. In concert with CRTC1/TORC1, regulates the light-induced entrainment of the circadian clock by attenuating PER1 induction; represses CREB-mediated transcription of PER1 by phosphorylating and deactivating CRTC1/TORC1. The polypeptide is Serine/threonine-protein kinase SIK1 (SIK1) (Homo sapiens (Human)).